The sequence spans 138 residues: Transcription antitermination protein NusB (138 aa).

This sequence belongs to the NusB family.

Functionally, involved in transcription antitermination. Required for transcription of ribosomal RNA (rRNA) genes. Binds specifically to the boxA antiterminator sequence of the ribosomal RNA (rrn) operons. In Helicobacter pylori (strain Shi470), this protein is Transcription antitermination protein NusB.